Reading from the N-terminus, the 158-residue chain is Transcription elongation factor GreA (158 aa).

The protein belongs to the GreA/GreB family.

In terms of biological role, necessary for efficient RNA polymerase transcription elongation past template-encoded arresting sites. The arresting sites in DNA have the property of trapping a certain fraction of elongating RNA polymerases that pass through, resulting in locked ternary complexes. Cleavage of the nascent transcript by cleavage factors such as GreA or GreB allows the resumption of elongation from the new 3'terminus. GreA releases sequences of 2 to 3 nucleotides. This chain is Transcription elongation factor GreA, found in Allorhizobium ampelinum (strain ATCC BAA-846 / DSM 112012 / S4) (Agrobacterium vitis (strain S4)).